Consider the following 463-residue polypeptide: ATP synthase subunit beta (463 aa).

152-159 (GGAGVGKT) is an ATP binding site.

The protein belongs to the ATPase alpha/beta chains family. F-type ATPases have 2 components, CF(1) - the catalytic core - and CF(0) - the membrane proton channel. CF(1) has five subunits: alpha(3), beta(3), gamma(1), delta(1), epsilon(1). CF(0) has three main subunits: a(1), b(2) and c(9-12). The alpha and beta chains form an alternating ring which encloses part of the gamma chain. CF(1) is attached to CF(0) by a central stalk formed by the gamma and epsilon chains, while a peripheral stalk is formed by the delta and b chains.

The protein localises to the cell membrane. The enzyme catalyses ATP + H2O + 4 H(+)(in) = ADP + phosphate + 5 H(+)(out). In terms of biological role, produces ATP from ADP in the presence of a proton gradient across the membrane. The catalytic sites are hosted primarily by the beta subunits. The chain is ATP synthase subunit beta from Clostridium botulinum (strain Alaska E43 / Type E3).